The following is a 1265-amino-acid chain: Kinesin-like protein Klp98A (1265 aa).

Residues 3 to 364 (SLKVAVRVRP…LRYANRAKNI (362 aa)) enclose the Kinesin motor domain. 100–107 (GQTGSGKT) lines the ATP pocket. 3 disordered regions span residues 597–621 (GASP…DPEL), 828–864 (EAES…DVSK), and 884–954 (VSSP…CTPS). 2 coiled-coil regions span residues 619–670 (PELQ…EEMD) and 768–848 (AQFI…LGNK). Polar residues-rich tracts occupy residues 846-857 (GNKSMSTSTSTN), 884-901 (VSSP…SNCS), and 917-927 (SGSSEETSRTC). A compositionally biased stretch (gly residues) spans 933–946 (SGSGSGSVGIGGSG). The stretch at 1035–1071 (DLNKAQLDEHIADLQDLQRRYIQMEQEMLQSVQDLEA) forms a coiled coil. In terms of domain architecture, PX spans 1129 to 1259 (GEHFITIPSF…SFFKKGLFEN (131 aa)).

Belongs to the TRAFAC class myosin-kinesin ATPase superfamily. Kinesin family. In terms of assembly, interacts with Atg8a and Rab14.

The protein resides in the early endosome. Its function is as follows. Plus end-directed motor protein involved in asymmetric cell division of sensory organ precursor (SOP) cells by playing a role in the asymmetric localization of Sara-expressing endosomes to the pIIa daughter cell but not to the pIIb cell. Targets Sara-expressing endosomes to the central spindle which is symmetrically arranged in early cell division. During late cytokinesis, central spindle asymmetry is generated by enrichment of Patronin on the pIIb side which protects microtubules from depolymerization by Klp10A while unprotected microtubules on the pIIa side are disassembled by Klp10A, leading to the asymmetric delivery of Sara-expressing endosomes to the pIIa daughter cell. Also plays a role in regulation of autophagosome formation, fusion and positioning and is required for normal localization of Rab14. The polypeptide is Kinesin-like protein Klp98A (Drosophila melanogaster (Fruit fly)).